The chain runs to 128 residues: Translation initiation factor 5A (128 aa).

A Hypusine modification is found at K35.

This sequence belongs to the eIF-5A family.

It localises to the cytoplasm. Functions by promoting the formation of the first peptide bond. This chain is Translation initiation factor 5A (eif5a), found in Methanosarcina mazei (strain ATCC BAA-159 / DSM 3647 / Goe1 / Go1 / JCM 11833 / OCM 88) (Methanosarcina frisia).